Reading from the N-terminus, the 746-residue chain is Methyl-CpG-binding domain-containing protein 13 (746 aa).

Short sequence motifs (nuclear localization signal) lie at residues 13–20 (ERKVEIRV) and 44–51 (IKKLEITN). Residues 29-104 (VIVEKSAAQG…KESDIEDDDS (76 aa)) form the MBD domain. Disordered regions lie at residues 131–157 (IDDVRRSKRRNLSSSDEHSKNCKMTSD), 169–283 (LGKK…PTPE), 295–328 (PLDDEPTPELKTRTKVQRVVPPDDEPTPELKTRT), 348–479 (TKVQ…LKSP), 518–562 (TAAG…SGSA), and 696–746 (EPDT…FSKD). Over residues 169 to 180 (LGKKEEVKDPIE) the composition is skewed to basic and acidic residues. Residues 190 to 199 (RSQTKASTTE) show a composition bias toward polar residues. Positions 244-260 (SSEKRITRSKVEEKKNE) are enriched in basic and acidic residues. The short motif at 256 to 263 (EKKNELSN) is the Nuclear localization signal element. Over residues 427–451 (VAQSCNEQSSQKPHAAAATSNNRVS) the composition is skewed to polar residues. Residues 465 to 476 (VGRKPSKDKKTL) are compositionally biased toward basic residues. Composition is skewed to polar residues over residues 529-546 (PKANLTTSVKPTQISPLR) and 702-730 (KSQGMTSTTAATQEAKGRQNNCDYMTNKT). Residues 732 to 746 (GKPDDLRFTQSFSKD) show a composition bias toward basic and acidic residues.

It is found in the nucleus. Its function is as follows. Probable transcriptional regulator. The protein is Methyl-CpG-binding domain-containing protein 13 (MBD13) of Arabidopsis thaliana (Mouse-ear cress).